The chain runs to 281 residues: Aquaporin-9 (281 aa).

At Met-1 to Arg-17 the chain is on the cytoplasmic side. The chain crosses the membrane as a helical span at residues Asp-18–Ser-36. At Ala-37–Leu-50 the chain is on the extracellular side. Residues Phe-51–Ala-69 traverse the membrane as a helical segment. The Cytoplasmic portion of the chain corresponds to Met-70–Ser-71. The segment at residues Gly-72–Ala-84 is an intramembrane region (discontinuously helical). Positions Asn-76–Ala-78 match the NPA 1 motif. Residues Leu-85 to Ser-90 lie on the Cytoplasmic side of the membrane. A helical transmembrane segment spans residues Trp-91–Ile-115. Residues Tyr-116–Gly-157 are Extracellular-facing. Residues Asn-117 and Asn-128 are each glycosylated (N-linked (GlcNAc...) asparagine). Residues Ala-158–Ala-175 form a helical membrane-spanning segment. Residues Ile-176–Gly-187 are Cytoplasmic-facing. Residues Leu-188 to Phe-204 traverse the membrane as a helical segment. The Extracellular segment spans residues Ser-205 to Ser-207. The discontinuously helical intramembrane region spans Thr-208–Leu-222. The short motif at Asn-213–Ala-215 is the NPA 2 element. Residues Trp-223–Trp-241 lie on the Extracellular side of the membrane. A helical membrane pass occupies residues Phe-242–Leu-262. The Cytoplasmic segment spans residues Leu-263–Pro-281.

Belongs to the MIP/aquaporin (TC 1.A.8) family.

The protein resides in the cell membrane. It carries out the reaction H2O(in) = H2O(out). Functionally, aquaglyceroporin that may modulate the water content and osmolytes during anhydrobiosis. This chain is Aquaporin-9, found in Milnesium tardigradum (Water bear).